Reading from the N-terminus, the 162-residue chain is NADPH-dependent 7-cyano-7-deazaguanine reductase (162 aa).

C53 (thioimide intermediate) is an active-site residue. D60 serves as the catalytic Proton donor. Substrate-binding positions include 75–77 and 94–95; these read VES and HE.

It belongs to the GTP cyclohydrolase I family. QueF type 1 subfamily.

It is found in the cytoplasm. It catalyses the reaction 7-aminomethyl-7-carbaguanine + 2 NADP(+) = 7-cyano-7-deazaguanine + 2 NADPH + 3 H(+). The protein operates within tRNA modification; tRNA-queuosine biosynthesis. In terms of biological role, catalyzes the NADPH-dependent reduction of 7-cyano-7-deazaguanine (preQ0) to 7-aminomethyl-7-deazaguanine (preQ1). This Streptococcus mutans serotype c (strain ATCC 700610 / UA159) protein is NADPH-dependent 7-cyano-7-deazaguanine reductase.